The sequence spans 172 residues: Antibacterial protein PR-39 (172 aa).

Residues M1 to A29 form the signal peptide. The residue at position 30 (Q30) is a Pyrrolidone carboxylic acid. Positions Q30–V130 are excised as a propeptide. Residues D61–V80 form a disordered region. Cystine bridges form between C85-C96 and C107-C124. A disordered region spans residues V130–R172. The segment covering P136–R172 has biased composition (pro residues). Proline amide is present on P169.

This sequence belongs to the cathelicidin family. In terms of tissue distribution, small intestine and bone marrow.

It localises to the secreted. In terms of biological role, exerts a potent antimicrobial activity against both E.coli and B.megaterium. This is Antibacterial protein PR-39 (PR39) from Sus scrofa (Pig).